The primary structure comprises 397 residues: Aspartate/prephenate aminotransferase (397 aa).

3 residues coordinate L-aspartate: Gly38, Trp124, and Asn174. Lys238 bears the N6-(pyridoxal phosphate)lysine mark. L-aspartate is bound at residue Arg375.

The protein belongs to the class-I pyridoxal-phosphate-dependent aminotransferase family. In terms of assembly, homodimer. Pyridoxal 5'-phosphate is required as a cofactor.

The protein resides in the cytoplasm. It carries out the reaction L-aspartate + 2-oxoglutarate = oxaloacetate + L-glutamate. It catalyses the reaction L-arogenate + 2-oxoglutarate = prephenate + L-glutamate. In terms of biological role, catalyzes the reversible conversion of aspartate and 2-oxoglutarate to glutamate and oxaloacetate. Can also transaminate prephenate in the presence of glutamate, with lower efficiency. The sequence is that of Aspartate/prephenate aminotransferase from Nitrosomonas europaea (strain ATCC 19718 / CIP 103999 / KCTC 2705 / NBRC 14298).